The following is a 95-amino-acid chain: Beta-defensin 132 (95 aa).

Residues 1-22 (MKFLLLVLAALGFLTQVIPASA) form the signal peptide. Cystine bridges form between Cys27-Cys55, Cys35-Cys49, and Cys39-Cys56. Residues 74-95 (HWQSRRRNTQRKDKKQQTTVTS) are disordered. The segment covering 76–87 (QSRRRNTQRKDK) has biased composition (basic residues).

Belongs to the beta-defensin family.

The protein resides in the secreted. Has antibacterial activity. The sequence is that of Beta-defensin 132 (DEFB132) from Homo sapiens (Human).